The primary structure comprises 197 residues: Dephospho-CoA kinase (197 aa).

Residues 2 to 197 (IIGITGGIAS…SALLLLANPR (196 aa)) form the DPCK domain. 10–15 (ASGKST) lines the ATP pocket.

The protein belongs to the CoaE family.

The protein resides in the cytoplasm. It catalyses the reaction 3'-dephospho-CoA + ATP = ADP + CoA + H(+). It functions in the pathway cofactor biosynthesis; coenzyme A biosynthesis; CoA from (R)-pantothenate: step 5/5. Its function is as follows. Catalyzes the phosphorylation of the 3'-hydroxyl group of dephosphocoenzyme A to form coenzyme A. This chain is Dephospho-CoA kinase, found in Streptococcus pyogenes serotype M1.